The following is a 184-amino-acid chain: MLTTLRSRCSSLLLNQSWKLAPNRIFASSPSFSSSAGISNVSEILTLPEVEKILADVKADNVTVIPTHNHCFWADFTVIATGRSDWHLRNIAQALVYRAKQKQKGAKHVMLPSVQGYNSKWIVIDYGKFVVHALDEKARGYFNLESLWSAESSGTDTSDQDLQNVFVKVRPKNNSKRKPAKVSS.

The transit peptide at 1-39 (MLTTLRSRCSSLLLNQSWKLAPNRIFASSPSFSSSAGIS) directs the protein to the mitochondrion.

This sequence belongs to the Iojap/RsfS family.

Its subcellular location is the mitochondrion. Functionally, may be a ribosome silencing factor involved in organelle biogenesis and required for germination. The sequence is that of Protein Iojap-related, mitochondrial from Arabidopsis thaliana (Mouse-ear cress).